We begin with the raw amino-acid sequence, 325 residues long: NADH-quinone oxidoreductase subunit H (325 aa).

Transmembrane regions (helical) follow at residues 11–31 (ILIS…CGAF), 81–101 (AIFT…FAIV), 114–134 (IGIL…LFAG), 154–174 (LSYE…AGSF), 186–206 (VWNV…GVAV), 237–257 (FFVG…TLFF), 265–285 (LPPF…FILI), and 304–324 (VCLP…LYNA).

It belongs to the complex I subunit 1 family. In terms of assembly, NDH-1 is composed of 13 different subunits. Subunits NuoA, H, J, K, L, M, N constitute the membrane sector of the complex.

The protein localises to the cell inner membrane. It catalyses the reaction a quinone + NADH + 5 H(+)(in) = a quinol + NAD(+) + 4 H(+)(out). In terms of biological role, NDH-1 shuttles electrons from NADH, via FMN and iron-sulfur (Fe-S) centers, to quinones in the respiratory chain. The immediate electron acceptor for the enzyme in this species is believed to be ubiquinone. Couples the redox reaction to proton translocation (for every two electrons transferred, four hydrogen ions are translocated across the cytoplasmic membrane), and thus conserves the redox energy in a proton gradient. This subunit may bind ubiquinone. In Yersinia pseudotuberculosis serotype O:1b (strain IP 31758), this protein is NADH-quinone oxidoreductase subunit H.